The following is a 456-amino-acid chain: Glycerol-3-phosphate acyltransferase 4 (456 aa).

The N-terminal stretch at 1–37 is a signal peptide; sequence MFLLLPFDSLIVNLLGISLTVLFTLLLVFIIVPAIFG. The next 2 helical transmembrane spans lie at 156 to 176 and 180 to 200; these read ISLR…CFLL and IALA…VGYL. A glycan (N-linked (GlcNAc...) asparagine) is linked at Asn-247. An HXXXXD motif motif is present at residues 248-253; the sequence is HTSPID. Asn-327, Asn-328, and Asn-362 each carry an N-linked (GlcNAc...) asparagine glycan.

Belongs to the 1-acyl-sn-glycerol-3-phosphate acyltransferase family. In terms of tissue distribution, highly expressed in testis.

It localises to the endoplasmic reticulum membrane. The catalysed reaction is sn-glycerol 3-phosphate + an acyl-CoA = a 1-acyl-sn-glycero-3-phosphate + CoA. It carries out the reaction dodecanoyl-CoA + sn-glycerol 3-phosphate = 1-dodecanoyl-sn-glycerol 3-phosphate + CoA. The enzyme catalyses sn-glycerol 3-phosphate + hexadecanoyl-CoA = 1-hexadecanoyl-sn-glycero-3-phosphate + CoA. It catalyses the reaction sn-glycerol 3-phosphate + octadecanoyl-CoA = 1-octadecanoyl-sn-glycero-3-phosphate + CoA. The catalysed reaction is sn-glycerol 3-phosphate + (9Z)-octadecenoyl-CoA = 1-(9Z-octadecenoyl)-sn-glycero-3-phosphate + CoA. It carries out the reaction (9Z,12Z)-octadecadienoyl-CoA + sn-glycerol 3-phosphate = 1-(9Z,12Z)-octadecadienoyl-sn-glycero-3-phosphate + CoA. It participates in phospholipid metabolism; CDP-diacylglycerol biosynthesis; CDP-diacylglycerol from sn-glycerol 3-phosphate: step 1/3. Its function is as follows. Converts glycerol-3-phosphate to 1-acyl-sn-glycerol-3-phosphate (lysophosphatidic acid or LPA) by incorporating an acyl moiety at the sn-1 position of the glycerol backbone. Active against both saturated and unsaturated long-chain fatty acyl-CoAs. Protects cells against lipotoxicity. The protein is Glycerol-3-phosphate acyltransferase 4 of Mus musculus (Mouse).